The sequence spans 235 residues: Sugar fermentation stimulation protein homolog (235 aa).

This sequence belongs to the SfsA family.

This is Sugar fermentation stimulation protein homolog from Pseudomonas paraeruginosa (strain DSM 24068 / PA7) (Pseudomonas aeruginosa (strain PA7)).